A 259-amino-acid chain; its full sequence is UPF0739 protein C1orf74 homolog (259 aa).

This sequence belongs to the UPF0739 family.

The protein is UPF0739 protein C1orf74 homolog of Danio rerio (Zebrafish).